The chain runs to 269 residues: Protein CURLY FLAG LEAF 1 (269 aa).

Residues 17 to 44 are disordered; sequence SLNGGGGGGGGRRRGRRAAAAEGSDDSE. Residues 47 to 52 carry the EAR motif; that stretch reads TVELNS. The WW domain occupies 54–88; it reads VALPYHWEQCLDIRTGQVYYINWEDGTRTTIDPRS. 2 disordered regions span residues 83-133 and 174-218; these read TIDP…SGYT and GDDE…SGAG. 3 stretches are compositionally biased toward low complexity: residues 87-106, 121-133, and 180-202; these read RSSS…SSSR, AAAA…SGYT, and SSSS…AVSS. Residues 203–212 show a composition bias toward polar residues; the sequence is TLSSFSPTDE.

In terms of assembly, binds to HDG1.

Its function is as follows. Negatively regulates the cuticle development probably by interacting with the HD-ZIP IV transcription factor HDG1. This chain is Protein CURLY FLAG LEAF 1, found in Oryza sativa subsp. indica (Rice).